A 148-amino-acid chain; its full sequence is Transcriptional regulator MraZ (148 aa).

2 consecutive SpoVT-AbrB domains span residues 5–51 and 80–123; these read ATSL…PLPA and AEDV…SMEA.

This sequence belongs to the MraZ family. Forms oligomers.

Its subcellular location is the cytoplasm. It is found in the nucleoid. This chain is Transcriptional regulator MraZ, found in Methylobacillus flagellatus (strain ATCC 51484 / DSM 6875 / VKM B-1610 / KT).